Reading from the N-terminus, the 102-residue chain is NADH-quinone oxidoreductase subunit K (102 aa).

The next 3 helical transmembrane spans lie at 6–26, 30–50, and 62–82; these read LEHG…GVMV, LLFM…AFVL, and IMFI…LAIV.

It belongs to the complex I subunit 4L family. In terms of assembly, NDH-1 is composed of 14 different subunits. Subunits NuoA, H, J, K, L, M, N constitute the membrane sector of the complex.

It is found in the cell inner membrane. It carries out the reaction a quinone + NADH + 5 H(+)(in) = a quinol + NAD(+) + 4 H(+)(out). In terms of biological role, NDH-1 shuttles electrons from NADH, via FMN and iron-sulfur (Fe-S) centers, to quinones in the respiratory chain. The immediate electron acceptor for the enzyme in this species is believed to be ubiquinone. Couples the redox reaction to proton translocation (for every two electrons transferred, four hydrogen ions are translocated across the cytoplasmic membrane), and thus conserves the redox energy in a proton gradient. The sequence is that of NADH-quinone oxidoreductase subunit K from Acinetobacter baylyi (strain ATCC 33305 / BD413 / ADP1).